The sequence spans 136 residues: MIIGIGTDILQIERLQAAYDRTKGRLAEKILGPDEMLVFQHRLARNHKRGIAFLATRFAAKEAFSKAIGLGMRMPMAWRSLQTLNEPSGRPVTSYLGTLAQFMQEKNWEAHVTVSDEQDMAIAQVIVTQKIRGSDE.

Mg(2+) contacts are provided by Asp8 and Glu62.

It belongs to the P-Pant transferase superfamily. AcpS family. Mg(2+) serves as cofactor.

It localises to the cytoplasm. The catalysed reaction is apo-[ACP] + CoA = holo-[ACP] + adenosine 3',5'-bisphosphate + H(+). Functionally, transfers the 4'-phosphopantetheine moiety from coenzyme A to a Ser of acyl-carrier-protein. The polypeptide is Holo-[acyl-carrier-protein] synthase (Polynucleobacter necessarius subsp. necessarius (strain STIR1)).